Reading from the N-terminus, the 391-residue chain is Cytochrome P450 165A3 (391 aa).

Residues M1 to G22 form a disordered region. C342 contacts heme.

It belongs to the cytochrome P450 family. Requires heme as cofactor.

It participates in antibiotic biosynthesis; vancomycin biosynthesis. Its function is as follows. Involved in the coupling of aromatic side chains of the heptapeptide of vancomycin. In Amycolatopsis orientalis (Nocardia orientalis), this protein is Cytochrome P450 165A3 (cyp165A3).